The chain runs to 255 residues: Aliphatic sulfonates import ATP-binding protein SsuB (255 aa).

An ABC transporter domain is found at 12–233 (LLLNAVSKHY…RLGSVRLAEL (222 aa)). Position 44 to 51 (44 to 51 (GRSGGGKS)) interacts with ATP.

It belongs to the ABC transporter superfamily. Aliphatic sulfonates importer (TC 3.A.1.17.2) family. In terms of assembly, the complex is composed of two ATP-binding proteins (SsuB), two transmembrane proteins (SsuC) and a solute-binding protein (SsuA).

It localises to the cell inner membrane. The catalysed reaction is ATP + H2O + aliphatic sulfonate-[sulfonate-binding protein]Side 1 = ADP + phosphate + aliphatic sulfonateSide 2 + [sulfonate-binding protein]Side 1.. In terms of biological role, part of the ABC transporter complex SsuABC involved in aliphatic sulfonates import. Responsible for energy coupling to the transport system. In Shigella flexneri, this protein is Aliphatic sulfonates import ATP-binding protein SsuB.